The primary structure comprises 211 residues: Regulator of G-protein signaling 2 (211 aa).

Residues 32-66 (KMKRTLLKDWKTRLSYFLQNSSAPGKPKTGKKSKQ) form a necessary for membrane association region. The segment at 79 to 116 (LWAEAFDELLASKYGLAAFRAFLKSEFCEENIEFWLAC) is necessary to inhibit protein synthesis. The region spanning 83 to 199 (AFDELLASKY…LESEFYQDLC (117 aa)) is the RGS domain.

In terms of assembly, interacts with GNAQ. Does not interact with GNAI1 and GNAI3. Interacts with EIF2B5. Interacts with PRKG1 (isoform alpha). Post-translationally, phosphorylated by protein kinase C. Phosphorylation by PRKG1 leads to activation of RGS2 activity. As to expression, expressed in a wide variety of tissues.

It localises to the cell membrane. The protein resides in the cytoplasm. The protein localises to the nucleus. Its subcellular location is the nucleolus. Functionally, regulates G protein-coupled receptor signaling cascades. Inhibits signal transduction by increasing the GTPase activity of G protein alpha subunits, thereby driving them into their inactive GDP-bound form. It is involved in the negative regulation of the angiotensin-activated signaling pathway. Plays a role in the regulation of blood pressure in response to signaling via G protein-coupled receptors and GNAQ. Plays a role in regulating the constriction and relaxation of vascular smooth muscle. Binds EIF2B5 and blocks its activity, thereby inhibiting the translation of mRNA into protein. This Mus musculus (Mouse) protein is Regulator of G-protein signaling 2 (Rgs2).